The primary structure comprises 60 residues: Large ribosomal subunit protein uL30 (60 aa).

Belongs to the universal ribosomal protein uL30 family. In terms of assembly, part of the 50S ribosomal subunit.

This chain is Large ribosomal subunit protein uL30, found in Streptomyces filamentosus (Streptomyces roseosporus).